The chain runs to 465 residues: Na(+)-translocating NADH-quinone reductase subunit A (465 aa).

The protein belongs to the NqrA family. In terms of assembly, composed of six subunits; NqrA, NqrB, NqrC, NqrD, NqrE and NqrF.

It carries out the reaction a ubiquinone + n Na(+)(in) + NADH + H(+) = a ubiquinol + n Na(+)(out) + NAD(+). Functionally, NQR complex catalyzes the reduction of ubiquinone-1 to ubiquinol by two successive reactions, coupled with the transport of Na(+) ions from the cytoplasm to the periplasm. NqrA to NqrE are probably involved in the second step, the conversion of ubisemiquinone to ubiquinol. This Chlamydia trachomatis serovar A (strain ATCC VR-571B / DSM 19440 / HAR-13) protein is Na(+)-translocating NADH-quinone reductase subunit A.